A 181-amino-acid polypeptide reads, in one-letter code: MLKGKTIYVRPLEVTDAEENLGLQSENRDFFEQFSMIRADDYYTVEGQRKRITEYQERLEKDEEYHFGIFTASDDRLIGTVSLFQIIRGALQTAFIGYFLDKAHNGKGIMTEAVRLVVDYAFHELKLHRIEAGVMPRNLGSMRVLEKAGFHKEGIARKNVKINGVWEDHQVLAILNPDDEQ.

Positions 7-172 (IYVRPLEVTD…NGVWEDHQVL (166 aa)) constitute an N-acetyltransferase domain.

It belongs to the acetyltransferase family. RimJ subfamily.

It catalyses the reaction an N-terminal L-alpha-aminoacyl-[protein] + acetyl-CoA = N-terminal N(alpha)-acetyl-L-alpha-aminoacyl-[protein] + CoA + H(+). Probable N-terminal protein acetyltransferase. This is Probable N-acetyltransferase YjcK (yjcK) from Bacillus subtilis (strain 168).